The chain runs to 123 residues: Small ribosomal subunit protein uS12 (123 aa).

D89 bears the 3-methylthioaspartic acid mark.

It belongs to the universal ribosomal protein uS12 family. As to quaternary structure, part of the 30S ribosomal subunit. Contacts proteins S8 and S17. May interact with IF1 in the 30S initiation complex.

With S4 and S5 plays an important role in translational accuracy. In terms of biological role, interacts with and stabilizes bases of the 16S rRNA that are involved in tRNA selection in the A site and with the mRNA backbone. Located at the interface of the 30S and 50S subunits, it traverses the body of the 30S subunit contacting proteins on the other side and probably holding the rRNA structure together. The combined cluster of proteins S8, S12 and S17 appears to hold together the shoulder and platform of the 30S subunit. The chain is Small ribosomal subunit protein uS12 from Sinorhizobium medicae (strain WSM419) (Ensifer medicae).